The primary structure comprises 338 residues: Histidinol-phosphate aminotransferase (338 aa).

The residue at position 204 (K204) is an N6-(pyridoxal phosphate)lysine.

It belongs to the class-II pyridoxal-phosphate-dependent aminotransferase family. Histidinol-phosphate aminotransferase subfamily. Pyridoxal 5'-phosphate serves as cofactor.

It catalyses the reaction L-histidinol phosphate + 2-oxoglutarate = 3-(imidazol-4-yl)-2-oxopropyl phosphate + L-glutamate. The protein operates within amino-acid biosynthesis; L-histidine biosynthesis; L-histidine from 5-phospho-alpha-D-ribose 1-diphosphate: step 7/9. The sequence is that of Histidinol-phosphate aminotransferase from Pyrococcus furiosus (strain ATCC 43587 / DSM 3638 / JCM 8422 / Vc1).